A 353-amino-acid chain; its full sequence is Phenol 2-monooxygenase, reductase component DmpP (353 aa).

Residues tyrosine 3–alanine 93 form the 2Fe-2S ferredoxin-type domain. Residues cysteine 37, cysteine 42, cysteine 45, and cysteine 77 each contribute to the [2Fe-2S] cluster site. Residues valine 102 to arginine 201 enclose the FAD-binding FR-type domain.

The multicomponent enzyme phenol hydroxylase is formed by DmpL (P1 component), DmpM (P2 component), DmpN (P3 component), DmpO (P4 component) and DmpP (P5 component). Requires FAD as cofactor. [2Fe-2S] cluster is required as a cofactor.

The enzyme catalyses phenol + NADH + O2 + H(+) = catechol + NAD(+) + H2O. It functions in the pathway aromatic compound metabolism; phenol degradation. Part of a multicomponent enzyme which catalyzes the degradation of phenol and some of its methylated derivatives. DmpP probably transfers electrons from NADH, via FAD and the iron-sulfur center, to the oxygenase component of the complex. Required for growth on phenol and for in vitro phenol hydroxylase activity. In Pseudomonas sp. (strain CF600), this protein is Phenol 2-monooxygenase, reductase component DmpP.